A 109-amino-acid chain; its full sequence is Tyrosine-protein phosphatase 6 (109 aa).

One can recognise a Tyrosine-protein phosphatase domain in the interval 1-109; the sequence is YNINVIVMVC…SEDETTPLCV (109 aa). D76 lines the substrate pocket.

The protein belongs to the protein-tyrosine phosphatase family.

The enzyme catalyses O-phospho-L-tyrosyl-[protein] + H2O = L-tyrosyl-[protein] + phosphate. The protein is Tyrosine-protein phosphatase 6 (STY-6) of Styela plicata (Wrinkled sea squirt).